The primary structure comprises 197 residues: Ribonuclease HII (197 aa).

Residues 14-197 (GIIAGVDEVG…RKNFAPIRIL (184 aa)) form the RNase H type-2 domain. Residues aspartate 20, glutamate 21, and aspartate 112 each contribute to the a divalent metal cation site.

This sequence belongs to the RNase HII family. Requires Mn(2+) as cofactor. Mg(2+) is required as a cofactor.

It localises to the cytoplasm. It carries out the reaction Endonucleolytic cleavage to 5'-phosphomonoester.. In terms of biological role, endonuclease that specifically degrades the RNA of RNA-DNA hybrids. This is Ribonuclease HII from Wolbachia pipientis subsp. Culex pipiens (strain wPip).